The sequence spans 376 residues: Erythronate-4-phosphate dehydrogenase (376 aa).

Residues Ser45 and Thr67 each contribute to the substrate site. NAD(+)-binding positions include 127-128 (QV), Asp147, and Thr176. Residue Arg209 is part of the active site. Asp233 serves as a coordination point for NAD(+). Glu238 is a catalytic residue. Residue His255 is the Proton donor of the active site. Gly258 provides a ligand contact to NAD(+). Tyr259 lines the substrate pocket.

This sequence belongs to the D-isomer specific 2-hydroxyacid dehydrogenase family. PdxB subfamily. Homodimer.

It localises to the cytoplasm. It carries out the reaction 4-phospho-D-erythronate + NAD(+) = (R)-3-hydroxy-2-oxo-4-phosphooxybutanoate + NADH + H(+). The protein operates within cofactor biosynthesis; pyridoxine 5'-phosphate biosynthesis; pyridoxine 5'-phosphate from D-erythrose 4-phosphate: step 2/5. Its function is as follows. Catalyzes the oxidation of erythronate-4-phosphate to 3-hydroxy-2-oxo-4-phosphonooxybutanoate. This Aliivibrio fischeri (strain ATCC 700601 / ES114) (Vibrio fischeri) protein is Erythronate-4-phosphate dehydrogenase.